The primary structure comprises 412 residues: MAAVDHPASSLPHLQLLSDLTPPSLERTWLTAPHPRLPIVATCSSDKTVRVYSLTNFRLLSTISGGHKRSVRTAAWKPHVQGESVLATGSFDATAGIWRRWDSYGQTTGDEGWGLGQETTTNKSESQEEQAQETDILRQQQATHNENDGADDEDEEWRFAVLLDGHDSEVKSVSWSPSGMLLATCSRDKSIWIWEDLDDGDNNFETVAVMQEHEGDVKCVAWHPVEECLASASYDDTIRIWREDLDDWGQVACLRGHEGTVWFLSGPRIVSCSDDRTVRVWRRQPKEQAAAGGTGMPSILRPTGLDETWEEETVLPKVHDLAVYAVAWSKRTGLLASVGADGRIVIYEERLGVVRTEWVILAVLPGAHGIYEINHVAWANRADRDRDVSKEEEVLVTTADDGSVKVDETVGL.

WD repeat units follow at residues 20 to 62 (LTPP…LLST), 66 to 108 (GHKR…GQTT), 165 to 204 (GHDSEVKSVSWSPSGMLLATCSRDKSIWIWEDLDDGDNNF), 212 to 255 (EHEG…ACLR), 257 to 291 (HEGTVWFLSGPRIVSCSDDRTVRVWRRQPKEQAAA), 318 to 357 (VHDLAVYAVAWSKRTGLLASVGADGRIVIYEERLGVVRTE), and 367 to 407 (AHGI…VKVD). The interval 108 to 154 (TGDEGWGLGQETTTNKSESQEEQAQETDILRQQQATHNENDGADDED) is disordered.

Belongs to the WD repeat CIA1 family.

Essential component of the cytosolic iron-sulfur (Fe/S) protein assembly machinery. Required for the maturation of extramitochondrial Fe/S proteins. This Aspergillus niger (strain ATCC MYA-4892 / CBS 513.88 / FGSC A1513) protein is Probable cytosolic iron-sulfur protein assembly protein 1 (cia1).